We begin with the raw amino-acid sequence, 217 residues long: Uracil-DNA glycosylase (217 aa).

Asp-62 serves as the catalytic Proton acceptor.

It belongs to the uracil-DNA glycosylase (UDG) superfamily. UNG family.

The protein localises to the cytoplasm. It carries out the reaction Hydrolyzes single-stranded DNA or mismatched double-stranded DNA and polynucleotides, releasing free uracil.. Functionally, excises uracil residues from the DNA which can arise as a result of misincorporation of dUMP residues by DNA polymerase or due to deamination of cytosine. The chain is Uracil-DNA glycosylase from Streptococcus pyogenes serotype M3 (strain ATCC BAA-595 / MGAS315).